A 226-amino-acid polypeptide reads, in one-letter code: Eukaryotic translation initiation factor 3 subunit K (226 aa).

One can recognise a PCI domain in the interval tyrosine 44–histidine 202.

This sequence belongs to the eIF-3 subunit K family. Component of the eukaryotic translation initiation factor 3 (eIF-3) complex.

The protein localises to the cytoplasm. In terms of biological role, component of the eukaryotic translation initiation factor 3 (eIF-3) complex, which is involved in protein synthesis of a specialized repertoire of mRNAs and, together with other initiation factors, stimulates binding of mRNA and methionyl-tRNAi to the 40S ribosome. The eIF-3 complex specifically targets and initiates translation of a subset of mRNAs involved in cell proliferation. This chain is Eukaryotic translation initiation factor 3 subunit K (TIF3K1), found in Arabidopsis thaliana (Mouse-ear cress).